A 321-amino-acid polypeptide reads, in one-letter code: Probable proline iminopeptidase (321 aa).

Residues 35–296 (KPVVFLHGGP…IVVPDAGHSM (262 aa)) form the AB hydrolase-1 domain. S110 acts as the Nucleophile in catalysis. D266 is an active-site residue. H294 serves as the catalytic Proton donor.

Belongs to the peptidase S33 family.

Its subcellular location is the cytoplasm. The catalysed reaction is Release of N-terminal proline from a peptide.. Functionally, specifically catalyzes the removal of N-terminal proline residues from peptides. The chain is Probable proline iminopeptidase (pip) from Leptolyngbya boryana (Plectonema boryanum).